A 783-amino-acid polypeptide reads, in one-letter code: Rabenosyn-5 (783 aa).

A2 bears the N-acetylalanine mark. S3 is subject to Phosphoserine. The C2H2-type zinc-finger motif lies at 14–37 (FLCPLCLKDLQSFYQLQSHYEEEH). Positions 99–262 (RSHLSDFKKH…HCKDKLLKRE (164 aa)) are necessary for the correct targeting to endosomes. An FYVE-type zinc finger spans residues 156 to 259 (DQDVPFCPDC…CCTHCKDKLL (104 aa)). Residues C162, C165, C178, C181, C186, and C189 each contribute to the Zn(2+) site. Residues 206-223 (KDSLSTHTSPSQSPNSVH) are compositionally biased toward polar residues. Residues 206-240 (KDSLSTHTSPSQSPNSVHGSRRGSISSMSSVSSVL) are disordered. S214, S218, S225, and S229 each carry phosphoserine. Residues 227 to 239 (RGSISSMSSVSSV) are compositionally biased toward low complexity. Zn(2+)-binding residues include C251 and C254. Residues 263–499 (QQMDEKEHTP…QLQDEYDQQQ (237 aa)) form a necessary for interaction with RAB4A region. The necessary for interaction with EHD1 stretch occupies residues 263–783 (QQMDEKEHTP…TLAKQKGAPN (521 aa)). 2 coiled-coil regions span residues 377–412 (TKEQFEELKKKRKQDLEQKRTVERQAALESRRKLEE) and 471–531 (QAKA…ELER). Basic and acidic residues-rich tracts occupy residues 387 to 399 (KRKQDLEQKRTVE) and 405 to 414 (ESRRKLEERQ). Residues 387-433 (KRKQDLEQKRTVERQAALESRRKLEERQSGLASHTANGDVRSLRGIP) form a disordered region. Residues 495–514 (YDQQQTEKAIELSRKQAEEE) enclose the UIM domain. 2 disordered regions span residues 569 to 638 (SYSL…SPTE) and 663 to 733 (FEED…EEHI). Polar residues-rich tracts occupy residues 571–584 (SLDQDSSPVQSSTA) and 610–623 (TLPQSTMSQQSDKA). Positions 627–783 (PFDEDDLSSP…TLAKQKGAPN (157 aa)) are necessary for interaction with RAB5A. Acidic residues predominate over residues 663–673 (FEEDAEEEEVA). At S686 the chain carries Phosphoserine. The segment covering 721–733 (VDSDSGMEAEEHI) has biased composition (acidic residues).

Interacts with EHD1, RAB4A, RAB5A, RAB22A, RAB24 and VPS45. Binds simultaneously to RAB4A and RAB5A in vitro. Interacts with RAB4A and RAB5A that has been activated by GTP binding.

The protein localises to the cell membrane. The protein resides in the early endosome membrane. Functionally, rab4/Rab5 effector protein acting in early endocytic membrane fusion and membrane trafficking of recycling endosomes. Required for endosome fusion either homotypically or with clathrin coated vesicles. Plays a role in the lysosomal trafficking of CTSD/cathepsin D from the Golgi to lysosomes. Also promotes the recycling of transferrin directly from early endosomes to the plasma membrane. Binds phospholipid vesicles containing phosphatidylinositol 3-phosphate (PtdInsP3). Plays a role in the recycling of transferrin receptor to the plasma membrane. The polypeptide is Rabenosyn-5 (Mus musculus (Mouse)).